The following is a 1211-amino-acid chain: DNA-directed RNA polymerase subunit beta' (1211 aa).

Positions 60, 62, 75, and 78 each coordinate Zn(2+). Residues Asp449, Asp451, and Asp453 each contribute to the Mg(2+) site. The Zn(2+) site is built by Cys818, Cys892, Cys899, and Cys902.

It belongs to the RNA polymerase beta' chain family. In terms of assembly, the RNAP catalytic core consists of 2 alpha, 1 beta, 1 beta' and 1 omega subunit. When a sigma factor is associated with the core the holoenzyme is formed, which can initiate transcription. The cofactor is Mg(2+). Requires Zn(2+) as cofactor.

It carries out the reaction RNA(n) + a ribonucleoside 5'-triphosphate = RNA(n+1) + diphosphate. In terms of biological role, DNA-dependent RNA polymerase catalyzes the transcription of DNA into RNA using the four ribonucleoside triphosphates as substrates. The sequence is that of DNA-directed RNA polymerase subunit beta' from Limosilactobacillus reuteri (strain DSM 20016) (Lactobacillus reuteri).